A 561-amino-acid chain; its full sequence is MSPPGSAAGESAGGGGGGGGSGVPEEPMASADEGPAREEQRPIQPSFTKSLCRESHWKCLLLSLLMYGCLGAVAWCHVTTVTRLTFSSAYQGNSLMYHDSPCSNGYVYIPLAFLLMLYAVYLVECWHCQARHELQHRVDVSSVQERVGRMQQATPCIWWKAISYHYVRRTRQVTRYRNGDAYTTTQVYHERVNTHVAEAEFDYARCGVRDVSKTLVGLEGAPATRLRFTKCFSFASVEAENAYLCQRARFFAENEGLDDYMEAREGMHLKNVDFREFMVAFPDPARPPWYACSSAFWAAALLTLSWPLRVLAEYRTAYAHYHVEKLFGLEGPGSASSVGGGLSPSDELLPPLTHRLPRVNTVDSTELEWHIRSNQQLVPSYSEVLLMDLVELGSRCGGPGGSYVPRCRYGGVGGPGAAGVTPHWRSCEHCQRAVSSSSIFSRSALSICASPRAAQGPGASAGCGGSRFSLSRLYGSRRSCLWRSRSGSVNEASCPTEQTRLSSQASMRDNEEDEDEEEAGPPPPYQDALCFPVLIVHRQEGCLGHSHRSLHRHGSCVETSL.

The span at 1-10 (MSPPGSAAGE) shows a compositional bias: low complexity. A disordered region spans residues 1–42 (MSPPGSAAGESAGGGGGGGGSGVPEEPMASADEGPAREEQRP). Gly residues predominate over residues 11–22 (SAGGGGGGGGSG). 2 consecutive transmembrane segments (helical) span residues 59 to 79 (CLLL…CHVT) and 106 to 126 (YVYI…VECW). Residues 489 to 507 (VNEASCPTEQTRLSSQASM) show a composition bias toward polar residues. The segment at 489-523 (VNEASCPTEQTRLSSQASMRDNEEDEDEEEAGPPP) is disordered. The span at 510 to 519 (NEEDEDEEEA) shows a compositional bias: acidic residues.

The protein belongs to the TMEM151 family.

Its subcellular location is the membrane. This chain is Transmembrane protein 151B (Tmem151b), found in Mus musculus (Mouse).